A 101-amino-acid chain; its full sequence is Large ribosomal subunit protein uL23 (101 aa).

The protein belongs to the universal ribosomal protein uL23 family. Part of the 50S ribosomal subunit. Contacts protein L29, and trigger factor when it is bound to the ribosome.

Functionally, one of the early assembly proteins it binds 23S rRNA. One of the proteins that surrounds the polypeptide exit tunnel on the outside of the ribosome. Forms the main docking site for trigger factor binding to the ribosome. The protein is Large ribosomal subunit protein uL23 of Micrococcus luteus (strain ATCC 4698 / DSM 20030 / JCM 1464 / CCM 169 / CCUG 5858 / IAM 1056 / NBRC 3333 / NCIMB 9278 / NCTC 2665 / VKM Ac-2230) (Micrococcus lysodeikticus).